Consider the following 373-residue polypeptide: Putative glutamate--cysteine ligase 2-1 (373 aa).

This sequence belongs to the glutamate--cysteine ligase type 2 family. YbdK subfamily.

The enzyme catalyses L-cysteine + L-glutamate + ATP = gamma-L-glutamyl-L-cysteine + ADP + phosphate + H(+). Its function is as follows. ATP-dependent carboxylate-amine ligase which exhibits weak glutamate--cysteine ligase activity. The chain is Putative glutamate--cysteine ligase 2-1 from Legionella pneumophila (strain Paris).